The chain runs to 208 residues: Probable very-long-chain (3R)-3-hydroxyacyl-CoA dehydratase (208 aa).

Topologically, residues 1-11 (MSKILKIQYLK) are cytoplasmic. A helical transmembrane segment spans residues 12-35 (LYNVISCFLWMSVLLRTGLIWGIT). Topologically, residues 36–46 (KDTAVVFHETN) are lumenal. The helical transmembrane segment at 47-67 (TLVRWVQTLAIAEVFHSIFGL) threads the bilayer. Over 68–78 (VSSSPLTTIIQ) the chain is Cytoplasmic. The helical transmembrane segment at 79–97 (VASRLYLVWGVCYPFSYVI) threads the bilayer. The Lumenal portion of the chain corresponds to 98-102 (EGSPI). Residues 103 to 123 (YLSMIIAWSITEIIRYAFYAF) traverse the membrane as a helical segment. Over 124–134 (NLNGDIPAFLT) the chain is Cytoplasmic. A helical transmembrane segment spans residues 135-157 (WLRYNTFLILYPIGAGSEFLLVL). Catalysis depends on residues tyrosine 145 and glutamate 152. Residues 158–171 (KSRIAAQYVWSLNK) are Lumenal-facing. The chain crosses the membrane as a helical span at residues 172–192 (LLWPILMSIYPPGLYIMYTHM). The Cytoplasmic segment spans residues 193–208 (LAQRRKISKRAAARRT).

Belongs to the very long-chain fatty acids dehydratase HACD family.

The protein resides in the endoplasmic reticulum membrane. The catalysed reaction is a very-long-chain (3R)-3-hydroxyacyl-CoA = a very-long-chain (2E)-enoyl-CoA + H2O. It participates in lipid metabolism; fatty acid biosynthesis. Its function is as follows. Catalyzes the third of the four reactions of the long-chain fatty acids elongation cycle. This endoplasmic reticulum-bound enzymatic process, allows the addition of two carbons to the chain of long- and very long-chain fatty acids/VLCFAs per cycle. This enzyme catalyzes the dehydration of the 3-hydroxyacyl-CoA intermediate into trans-2,3-enoyl-CoA, within each cycle of fatty acid elongation. Thereby, it participates in the production of VLCFAs of different chain lengths that are involved in multiple biological processes as precursors of membrane lipids and lipid mediators. This Schizosaccharomyces pombe (strain 972 / ATCC 24843) (Fission yeast) protein is Probable very-long-chain (3R)-3-hydroxyacyl-CoA dehydratase.